Consider the following 342-residue polypeptide: Metalloendoproteinase 4-MMP (342 aa).

The N-terminal stretch at 1–34 is a signal peptide; sequence MHHHHHPCNRKPFTTIFSFFLLYLNLHNQQIIEA. The propeptide at 35 to 124 is activation peptide; it reads RNPSQFTTNP…KTAPFHTGKK (90 aa). The Cysteine switch motif lies at 104-111; the sequence is PRCGFPDD. Residues C106 and H252 each coordinate Zn(2+). The active site involves E253. Zn(2+) contacts are provided by H256 and H262. The N-linked (GlcNAc...) asparagine glycan is linked to N300. D317 carries GPI-anchor amidated aspartate lipidation. The propeptide at 318–342 is removed in mature form; it reads GSRIRSQGMIYSTLSTVIALCFLNW.

Belongs to the peptidase M10A family. Matrix metalloproteinases (MMPs) subfamily. Zn(2+) is required as a cofactor. In terms of tissue distribution, mostly expressed in flowers and stems, and, to a lower extent, in leaves and roots.

Its subcellular location is the cell membrane. Its activity is regulated as follows. Repressed by acetohydroxamic acid (AHA). Matrix metalloproteinases (MMPs) or matrixins may play a role in the degradation and remodeling of the extracellular matrix (ECM) during development or in response to stresses. Active on myelin basic protein (MBP) and, to some extent, on McaPLGLDpaAR-NH(2) (QF24) and beta-casein. This chain is Metalloendoproteinase 4-MMP, found in Arabidopsis thaliana (Mouse-ear cress).